The chain runs to 224 residues: Deoxyribose-phosphate aldolase (224 aa).

Catalysis depends on D92, which acts as the Proton donor/acceptor. The Schiff-base intermediate with acetaldehyde role is filled by K155. The active-site Proton donor/acceptor is the K184.

This sequence belongs to the DeoC/FbaB aldolase family. DeoC type 1 subfamily.

Its subcellular location is the cytoplasm. The enzyme catalyses 2-deoxy-D-ribose 5-phosphate = D-glyceraldehyde 3-phosphate + acetaldehyde. Its pathway is carbohydrate degradation; 2-deoxy-D-ribose 1-phosphate degradation; D-glyceraldehyde 3-phosphate and acetaldehyde from 2-deoxy-alpha-D-ribose 1-phosphate: step 2/2. Its function is as follows. Catalyzes a reversible aldol reaction between acetaldehyde and D-glyceraldehyde 3-phosphate to generate 2-deoxy-D-ribose 5-phosphate. This is Deoxyribose-phosphate aldolase from Shouchella clausii (strain KSM-K16) (Alkalihalobacillus clausii).